Consider the following 129-residue polypeptide: Small ribosomal subunit protein uS8 (129 aa).

It belongs to the universal ribosomal protein uS8 family. Part of the 30S ribosomal subunit.

One of the primary rRNA binding proteins, it binds directly to 16S rRNA central domain where it helps coordinate assembly of the platform of the 30S subunit. The sequence is that of Small ribosomal subunit protein uS8 from Archaeoglobus fulgidus (strain ATCC 49558 / DSM 4304 / JCM 9628 / NBRC 100126 / VC-16).